The following is a 277-amino-acid chain: Indole-3-glycerol phosphate synthase (277 aa).

Belongs to the TrpC family.

It carries out the reaction 1-(2-carboxyphenylamino)-1-deoxy-D-ribulose 5-phosphate + H(+) = (1S,2R)-1-C-(indol-3-yl)glycerol 3-phosphate + CO2 + H2O. It functions in the pathway amino-acid biosynthesis; L-tryptophan biosynthesis; L-tryptophan from chorismate: step 4/5. The chain is Indole-3-glycerol phosphate synthase from Pseudomonas putida (strain GB-1).